The following is a 359-amino-acid chain: Ras association domain-containing protein 7 (359 aa).

Positions 6–89 (VAMELKVWVD…VQFVLRRTGP (84 aa)) constitute a Ras-associating domain. Positions 87–123 (TGPSLSGRPSSDNCPPPERCPVRASLPPKPSAIPGRE) are disordered. A compositionally biased stretch (polar residues) spans 89–99 (PSLSGRPSSDN). Coiled coils occupy residues 180-208 (WEQE…TAEH) and 242-301 (AAER…QQFI). Residues 339–359 (SHILVSSLSPEVPPMRQSSWR) form a disordered region.

As to quaternary structure, interacts with MAP2K7 and GTP-bound NRAS. Polyubiquitinated and degraded by the proteasome upon prolonged stress stimuli.

Its subcellular location is the cytoplasm. It localises to the cytoskeleton. The protein resides in the microtubule organizing center. It is found in the centrosome. Functionally, negatively regulates stress-induced JNK activation and apoptosis by promoting MAP2K7 phosphorylation and inhibiting its ability to activate JNK. Following prolonged stress, anti-apoptotic effect stops because of degradation of RASSF7 protein via the ubiquitin-proteasome pathway. Required for the activation of AURKB and chromosomal congression during mitosis where it stimulates microtubule polymerization. This Mus musculus (Mouse) protein is Ras association domain-containing protein 7 (Rassf7).